Here is a 238-residue protein sequence, read N- to C-terminus: Probable transcriptional regulatory protein Mmwyl1_2868 (238 aa).

Belongs to the TACO1 family.

Its subcellular location is the cytoplasm. In Marinomonas sp. (strain MWYL1), this protein is Probable transcriptional regulatory protein Mmwyl1_2868.